The chain runs to 544 residues: Chaperonin GroEL (544 aa).

Residues 30 to 33 (TLGP), Lys-51, 87 to 91 (DGTTT), Gly-415, 481 to 483 (DAL), and Asp-497 each bind ATP.

The protein belongs to the chaperonin (HSP60) family. Forms a cylinder of 14 subunits composed of two heptameric rings stacked back-to-back. Interacts with the co-chaperonin GroES.

The protein localises to the cytoplasm. It catalyses the reaction ATP + H2O + a folded polypeptide = ADP + phosphate + an unfolded polypeptide.. In terms of biological role, together with its co-chaperonin GroES, plays an essential role in assisting protein folding. The GroEL-GroES system forms a nano-cage that allows encapsulation of the non-native substrate proteins and provides a physical environment optimized to promote and accelerate protein folding. This chain is Chaperonin GroEL, found in Chlamydia muridarum (strain MoPn / Nigg).